Consider the following 412-residue polypeptide: DNA polymerase IV (412 aa).

The UmuC domain maps to 12–193; sequence ILHVDMNCFF…LPVGAMHGIG (182 aa). Positions 16 and 112 each coordinate Mg(2+). Residue glutamate 113 is part of the active site. Positions 235–257 are disordered; it reads KGMDDREVDPSQMGQHKSVGNSM. Positions 246–257 are enriched in polar residues; sequence QMGQHKSVGNSM.

This sequence belongs to the DNA polymerase type-Y family. Monomer. Mg(2+) serves as cofactor.

It localises to the cytoplasm. It catalyses the reaction DNA(n) + a 2'-deoxyribonucleoside 5'-triphosphate = DNA(n+1) + diphosphate. Its function is as follows. Poorly processive, error-prone DNA polymerase involved in untargeted mutagenesis. Copies undamaged DNA at stalled replication forks, which arise in vivo from mismatched or misaligned primer ends. These misaligned primers can be extended by PolIV. Exhibits no 3'-5' exonuclease (proofreading) activity. May be involved in translesional synthesis, in conjunction with the beta clamp from PolIII. The chain is DNA polymerase IV from Bacillus anthracis.